The following is a 29-amino-acid chain: Toxin TdII-3 (29 aa).

The LCN-type CS-alpha/beta domain occupies 1–29; sequence KDGYLVGTDGCKYGCFTRPGHFCANEECL.

The protein belongs to the long (4 C-C) scorpion toxin superfamily. Sodium channel inhibitor family. Beta subfamily. Expressed by the venom gland.

The protein localises to the secreted. In terms of biological role, binds voltage-independently to sodium channels (Nav) and shifts the voltage of activation toward more negative potentials. This toxin is active against mammals and also affects neuromuscular preparations of frog. This chain is Toxin TdII-3, found in Tityus discrepans (Venezuelan scorpion).